We begin with the raw amino-acid sequence, 305 residues long: Spore coat protein CotA (305 aa).

The protein localises to the spore coat. It localises to the spore. Its subcellular location is the perispore. Contributes to maintain proper thickness of the spore coat. May contribute to the formation of polar appendages. May play an important role in assembly of the outer layers of the spore coat. The sequence is that of Spore coat protein CotA from Clostridioides difficile (strain 630) (Peptoclostridium difficile).